The sequence spans 364 residues: 3-isopropylmalate dehydrogenase (364 aa).

79 to 92 (GPKWEHLPAAEQPE) serves as a coordination point for NAD(+). 4 residues coordinate substrate: Arg100, Arg110, Arg139, and Asp228. The Mg(2+) site is built by Asp228, Asp252, and Asp256. An NAD(+)-binding site is contributed by 286–298 (GSAPDIAGKDIAN).

The protein belongs to the isocitrate and isopropylmalate dehydrogenases family. LeuB type 1 subfamily. Homodimer. The cofactor is Mg(2+). Requires Mn(2+) as cofactor.

Its subcellular location is the cytoplasm. It catalyses the reaction (2R,3S)-3-isopropylmalate + NAD(+) = 4-methyl-2-oxopentanoate + CO2 + NADH. Its pathway is amino-acid biosynthesis; L-leucine biosynthesis; L-leucine from 3-methyl-2-oxobutanoate: step 3/4. In terms of biological role, catalyzes the oxidation of 3-carboxy-2-hydroxy-4-methylpentanoate (3-isopropylmalate) to 3-carboxy-4-methyl-2-oxopentanoate. The product decarboxylates to 4-methyl-2 oxopentanoate. The polypeptide is 3-isopropylmalate dehydrogenase (Sodalis glossinidius (strain morsitans)).